Reading from the N-terminus, the 143-residue chain is Small ribosomal subunit protein uS9 (143 aa).

Residues 118–143 form a disordered region; the sequence is DSRRTEPHKPNRSTKGPRAKRQKSYR. Basic residues predominate over residues 127 to 143; that stretch reads PNRSTKGPRAKRQKSYR.

The protein belongs to the universal ribosomal protein uS9 family.

The polypeptide is Small ribosomal subunit protein uS9 (Thermococcus sibiricus (strain DSM 12597 / MM 739)).